The primary structure comprises 139 residues: Small ribosomal subunit protein uS12 (139 aa).

Asp102 carries the 3-methylthioaspartic acid modification.

Belongs to the universal ribosomal protein uS12 family. As to quaternary structure, part of the 30S ribosomal subunit. Contacts proteins S8 and S17. May interact with IF1 in the 30S initiation complex.

Its function is as follows. With S4 and S5 plays an important role in translational accuracy. In terms of biological role, interacts with and stabilizes bases of the 16S rRNA that are involved in tRNA selection in the A site and with the mRNA backbone. Located at the interface of the 30S and 50S subunits, it traverses the body of the 30S subunit contacting proteins on the other side and probably holding the rRNA structure together. The combined cluster of proteins S8, S12 and S17 appears to hold together the shoulder and platform of the 30S subunit. In Phytoplasma australiense, this protein is Small ribosomal subunit protein uS12.